A 461-amino-acid chain; its full sequence is Fumarate hydratase class II (461 aa).

Substrate contacts are provided by residues Ser97–Thr99, His127–Asp130, Ser137–Asn139, and Thr185. Catalysis depends on His186, which acts as the Proton donor/acceptor. Residue Ser316 is part of the active site. Substrate-binding positions include Ser317 and Lys322–Asn324.

The protein belongs to the class-II fumarase/aspartase family. Fumarase subfamily. In terms of assembly, homotetramer.

It localises to the cytoplasm. It catalyses the reaction (S)-malate = fumarate + H2O. Its pathway is carbohydrate metabolism; tricarboxylic acid cycle; (S)-malate from fumarate: step 1/1. Functionally, involved in the TCA cycle. Catalyzes the stereospecific interconversion of fumarate to L-malate. This is Fumarate hydratase class II from Staphylococcus epidermidis (strain ATCC 35984 / DSM 28319 / BCRC 17069 / CCUG 31568 / BM 3577 / RP62A).